Consider the following 387-residue polypeptide: UDP-N-acetylglucosamine--N-acetylmuramyl-(pentapeptide) pyrophosphoryl-undecaprenol N-acetylglucosamine transferase (387 aa).

Residues threonine 23–glycine 25, asparagine 135, arginine 174, serine 203, isoleucine 261, alanine 280–glutamate 285, and glutamine 306 each bind UDP-N-acetyl-alpha-D-glucosamine.

The protein belongs to the glycosyltransferase 28 family. MurG subfamily.

It is found in the cell inner membrane. The enzyme catalyses di-trans,octa-cis-undecaprenyl diphospho-N-acetyl-alpha-D-muramoyl-L-alanyl-D-glutamyl-meso-2,6-diaminopimeloyl-D-alanyl-D-alanine + UDP-N-acetyl-alpha-D-glucosamine = di-trans,octa-cis-undecaprenyl diphospho-[N-acetyl-alpha-D-glucosaminyl-(1-&gt;4)]-N-acetyl-alpha-D-muramoyl-L-alanyl-D-glutamyl-meso-2,6-diaminopimeloyl-D-alanyl-D-alanine + UDP + H(+). It participates in cell wall biogenesis; peptidoglycan biosynthesis. Its function is as follows. Cell wall formation. Catalyzes the transfer of a GlcNAc subunit on undecaprenyl-pyrophosphoryl-MurNAc-pentapeptide (lipid intermediate I) to form undecaprenyl-pyrophosphoryl-MurNAc-(pentapeptide)GlcNAc (lipid intermediate II). The chain is UDP-N-acetylglucosamine--N-acetylmuramyl-(pentapeptide) pyrophosphoryl-undecaprenol N-acetylglucosamine transferase from Colwellia psychrerythraea (strain 34H / ATCC BAA-681) (Vibrio psychroerythus).